Consider the following 228-residue polypeptide: GIVRYTKMKTATNIYIFNLALADALATSTLPFQSAKYLMETWPFGELLCKAVLSIDYYNMFTSIFTLTMMSVDRYIAVCHPVKALDFRTPAKAKLINICIWVLASGVGVPIMVMAVTRPRDGAVVCMLQFPSPSWYWDTVTKICVFLFAFVVPILVITVCYGLMLLRLRSVRLLSGSKEKDRSLRRITRMVLVVVGAFVVCWAPIHIFVIVWTLVDIDRRDPLVVAAL.

The helical transmembrane segment at 1 to 3 threads the bilayer; that stretch reads GIV. The Cytoplasmic segment spans residues 4-13; the sequence is RYTKMKTATN. The helical transmembrane segment at 14–38 threads the bilayer; the sequence is IYIFNLALADALATSTLPFQSAKYL. At 39–50 the chain is on the extracellular side; sequence METWPFGELLCK. A disulfide bond links Cys-49 and Cys-126. The helical transmembrane segment at 51–72 threads the bilayer; it reads AVLSIDYYNMFTSIFTLTMMSV. Residues 73–91 lie on the Cytoplasmic side of the membrane; that stretch reads DRYIAVCHPVKALDFRTPA. The chain crosses the membrane as a helical span at residues 92-114; the sequence is KAKLINICIWVLASGVGVPIMVM. Residues 115-134 lie on the Extracellular side of the membrane; it reads AVTRPRDGAVVCMLQFPSPS. Residues 135 to 166 form a helical membrane-spanning segment; it reads WYWDTVTKICVFLFAFVVPILVITVCYGLMLL. Topologically, residues 167 to 189 are cytoplasmic; the sequence is RLRSVRLLSGSKEKDRSLRRITR. The chain crosses the membrane as a helical span at residues 190-212; it reads MVLVVVGAFVVCWAPIHIFVIVW. Residues 213–227 are Extracellular-facing; that stretch reads TLVDIDRRDPLVVAA.

This sequence belongs to the G-protein coupled receptor 1 family. As to quaternary structure, may form homooligomers. Forms a heterodimer with OPRM1. Interacts with GPRASP1. Interacts with RTP4; the interaction promotes cell surface localization of the OPRD1-OPRM1 heterodimer. Post-translationally, ubiquitinated. A basal ubiquitination seems not to be related to degradation. Ubiquitination is increased upon formation of OPRM1:OPRD1 oligomers leading to proteasomal degradation; the ubiquitination is diminished by RTP4. Detected in myenteric plexus and smooth muscle (at protein level). Detected in brain and intestine.

It is found in the cell membrane. Its function is as follows. G-protein coupled receptor that functions as a receptor for endogenous enkephalins and for a subset of other opioids. Ligand binding causes a conformation change that triggers signaling via guanine nucleotide-binding proteins (G proteins) and modulates the activity of down-stream effectors, such as adenylate cyclase. Signaling leads to the inhibition of adenylate cyclase activity. Inhibits neurotransmitter release by reducing calcium ion currents and increasing potassium ion conductance. Plays a role in the perception of pain and in opiate-mediated analgesia. Plays a role in developing analgesic tolerance to morphine. The protein is Delta-type opioid receptor (OPRD1) of Sus scrofa (Pig).